The chain runs to 265 residues: 3-methyl-2-oxobutanoate hydroxymethyltransferase (265 aa).

2 residues coordinate Mg(2+): aspartate 46 and aspartate 85. 3-methyl-2-oxobutanoate contacts are provided by residues 46-47 (DS), aspartate 85, and lysine 114. Glutamate 116 serves as a coordination point for Mg(2+). The Proton acceptor role is filled by glutamate 183.

It belongs to the PanB family. As to quaternary structure, homodecamer; pentamer of dimers. Mg(2+) serves as cofactor.

Its subcellular location is the cytoplasm. The enzyme catalyses 3-methyl-2-oxobutanoate + (6R)-5,10-methylene-5,6,7,8-tetrahydrofolate + H2O = 2-dehydropantoate + (6S)-5,6,7,8-tetrahydrofolate. It participates in cofactor biosynthesis; coenzyme A biosynthesis. In terms of biological role, catalyzes the reversible reaction in which hydroxymethyl group from 5,10-methylenetetrahydrofolate is transferred onto alpha-ketoisovalerate to form ketopantoate. This is 3-methyl-2-oxobutanoate hydroxymethyltransferase from Caldivirga maquilingensis (strain ATCC 700844 / DSM 13496 / JCM 10307 / IC-167).